The chain runs to 663 residues: DNA ligase (663 aa).

NAD(+) contacts are provided by residues 31-35 (DSEYD), 80-81 (SL), and E109. K111 serves as the catalytic N6-AMP-lysine intermediate. The NAD(+) site is built by R132, E166, K282, and K306. C400, C403, C418, and C423 together coordinate Zn(2+). The region spanning 585–663 (ELHPVFGEKT…EQMMVDALRN (79 aa)) is the BRCT domain.

Belongs to the NAD-dependent DNA ligase family. LigA subfamily. Requires Mg(2+) as cofactor. It depends on Mn(2+) as a cofactor.

It carries out the reaction NAD(+) + (deoxyribonucleotide)n-3'-hydroxyl + 5'-phospho-(deoxyribonucleotide)m = (deoxyribonucleotide)n+m + AMP + beta-nicotinamide D-nucleotide.. In terms of biological role, DNA ligase that catalyzes the formation of phosphodiester linkages between 5'-phosphoryl and 3'-hydroxyl groups in double-stranded DNA using NAD as a coenzyme and as the energy source for the reaction. It is essential for DNA replication and repair of damaged DNA. This chain is DNA ligase, found in Macrococcus caseolyticus (strain JCSC5402) (Macrococcoides caseolyticum).